Consider the following 354-residue polypeptide: Rhodopsin (354 aa).

Residues 1-36 are Extracellular-facing; sequence MNGTEGPNFYIPMSNKTGVVRSPFDYPQYYLAEPWK. The N-linked (GlcNAc...) (hybrid) asparagine glycan is linked to Asn2. N-linked (GlcNAc...) asparagine glycosylation occurs at Asn15. Residues 37-61 form a helical membrane-spanning segment; that stretch reads YSVLAAYMFLLILLGLPINFMTLYV. At 62–73 the chain is on the cytoplasmic side; that stretch reads TIQHKKLRTPLN. Residues 74–96 form a helical membrane-spanning segment; the sequence is YILLNLGVCNHFMVLCGFTITMY. Over 97–110 the chain is Extracellular; sequence TSLHGYFVFGQTGC. Cys110 and Cys187 are oxidised to a cystine. Residues 111-133 traverse the membrane as a helical segment; the sequence is YFEGFFATLGGEIALWSLVVLAI. The short motif at 134-136 is the 'Ionic lock' involved in activated form stabilization element; sequence ERY. Topologically, residues 134–152 are cytoplasmic; it reads ERYIVVCKPMSNFRFGENH. A helical membrane pass occupies residues 153-173; sequence AMMGVAFTWIMALACAVPPLF. At 174 to 202 the chain is on the extracellular side; it reads GWSRYIPEGMQCSCGVDYYTLKPEVNNES. The chain crosses the membrane as a helical span at residues 203–224; sequence FVIYMFVVHFLIPLIIISFCYG. Residues 225-252 are Cytoplasmic-facing; the sequence is RLVCTVKEAAAQQQESATTQKAEKEVTR. Residues 253-274 traverse the membrane as a helical segment; the sequence is MVIIMVIFFLICWVPYAYVAFY. Topologically, residues 275–286 are extracellular; the sequence is IFTHQGSEFGPI. A helical membrane pass occupies residues 287 to 308; that stretch reads FMTVPAFFAKSSAIYNPVIYIM. The residue at position 296 (Lys296) is an N6-(retinylidene)lysine. Residues 309–354 lie on the Cytoplasmic side of the membrane; sequence LNKQFRNCMITTLCCGKNPFGDDDASSAATSKTEATSVSTSQVSPA. 2 S-palmitoyl cysteine lipidation sites follow: Cys322 and Cys323. The tract at residues 332-354 is disordered; the sequence is DASSAATSKTEATSVSTSQVSPA. The segment covering 334–354 has biased composition (low complexity); it reads SSAATSKTEATSVSTSQVSPA.

Belongs to the G-protein coupled receptor 1 family. Opsin subfamily. Contains one covalently linked retinal chromophore. Upon light absorption, the covalently bound 11-cis-retinal is converted to all-trans-retinal. After hydrolysis of the Schiff base and release of the covalently bound all-trans-retinal, active rhodopsin is regenerated by binding of a fresh molecule of 11-cis-retinal. In terms of tissue distribution, detected in retina rod photoreceptor cell outer segments (at protein level). Detected in retina.

Its subcellular location is the membrane. The protein resides in the cell projection. The protein localises to the cilium. It is found in the photoreceptor outer segment. Its function is as follows. Photoreceptor required for image-forming vision at low light intensity. Required for photoreceptor cell viability after birth. Light-induced isomerization of 11-cis to all-trans retinal triggers a conformational change that activates signaling via G-proteins. Subsequent receptor phosphorylation mediates displacement of the bound G-protein alpha subunit by arrestin and terminates signaling. The polypeptide is Rhodopsin (RHO) (Lithobates pipiens (Northern leopard frog)).